The chain runs to 813 residues: Microtubule-associated protein 6 (813 aa).

S-palmitoyl cysteine attachment occurs at residues C5, C10, and C11. Disordered stretches follow at residues A36–D283, V314–S651, and P756–P813. Residues G41–Q50 show a composition bias toward pro residues. Over residues Q51–A62 the composition is skewed to low complexity. A compositionally biased stretch (gly residues) spans G100 to S112. Position 102 is a phosphoserine (S102). Residues D118–S141 are mn 1. The span at M121–S141 shows a compositional bias: basic and acidic residues. A calmodulin-binding region spans residues R126–R140. Y143 bears the Phosphotyrosine mark. The span at P149 to W173 shows a compositional bias: basic and acidic residues. The interval E153 to K176 is mn 2. Positions A162–K176 are calmodulin-binding. S187 carries the post-translational modification Phosphoserine. Calmodulin-binding regions lie at residues P189–R203, R306–K320, R357–P371, and P384–K398. Residues S298–P321 are mn 3. The span at P367 to K376 shows a compositional bias: basic and acidic residues. Over residues K383–K398 the composition is skewed to basic residues. Residues K420 to E439 show a composition bias toward basic and acidic residues. Positions Q443–P454 are enriched in polar residues. The span at K637–S651 shows a compositional bias: basic and acidic residues. S812 carries the post-translational modification Phosphoserine.

This sequence belongs to the STOP family. In terms of assembly, interacts with calmodulin (via C-terminus); the interaction is dependent on Ca(2+). Interacts (via C-terminus) with TMEM106B (via N-terminus). Interacts with ZDHHC17 (via ANK repeats). Interacts with ZDHHC13 (via ANK repeats). Palmitoylated. Probably depalmitoylated by ABHD17A, ABHD17B and ABHD17C. During neuronal polarization, palmitoylation and depalmitoylation cycles regulate MAP6 shuttling between secretory vesicles and microtubules, and its polarized distribution in the axon. In terms of tissue distribution, expressed in brain (at protein level). Expressed in spinal cord. Isoform 2 expression is up-regulated in the prefrontal cortex (Brodmann's area 46) of patients with schizophrenia (postmortem brain study).

It is found in the cytoplasm. The protein localises to the cytoskeleton. It localises to the golgi apparatus. Its subcellular location is the cell projection. The protein resides in the axon. It is found in the dendrite. The protein localises to the cytoplasmic vesicle. It localises to the secretory vesicle membrane. Its function is as follows. Involved in microtubule stabilization in many cell types, including neuronal cells. Specifically has microtubule cold stabilizing activity. Involved in dendrite morphogenesis and maintenance by regulating lysosomal trafficking via its interaction with TMEM106B. Regulates KIF5A-mediated axonal cargo transport. Regulates axonal growth during neuron polarization. This chain is Microtubule-associated protein 6 (MAP6), found in Homo sapiens (Human).